We begin with the raw amino-acid sequence, 24 residues long: Brevinin-1Bb (24 aa).

A disulfide bridge connects residues Cys-18 and Cys-24.

In terms of tissue distribution, expressed by the skin glands.

It localises to the secreted. Antibacterial activity against Gram-positive bacterium S.aureus and Gram-negative bacterium E.coli. Has activity against C.albicans. The polypeptide is Brevinin-1Bb (Lithobates berlandieri (Rio Grande leopard frog)).